The sequence spans 309 residues: Probable lipid kinase YegS-like (309 aa).

Residues 1-134 (MAPSHWRLIL…IDLLRIDADH (134 aa)) enclose the DAGKc domain. ATP contacts are provided by residues Thr-39, 65-71 (GDGTLSE), and Thr-96. Mg(2+)-binding residues include Leu-219, Asp-222, and Leu-224. Residue Glu-280 is the Proton acceptor of the active site.

The protein belongs to the diacylglycerol/lipid kinase family. YegS lipid kinase subfamily. Mg(2+) serves as cofactor. Ca(2+) is required as a cofactor.

It localises to the cytoplasm. Functionally, probably phosphorylates lipids; the in vivo substrate is unknown. In Xanthomonas campestris pv. campestris (strain 8004), this protein is Probable lipid kinase YegS-like.